Consider the following 516-residue polypeptide: Arabinose import ATP-binding protein AraG (516 aa).

2 consecutive ABC transporter domains span residues 5–240 and 240–497; these read LRFD…MVGR and REIS…LPQS. Residue 37–44 coordinates ATP; that stretch reads GENGAGKS.

The protein belongs to the ABC transporter superfamily. Arabinose importer (TC 3.A.1.2.2) family. As to quaternary structure, the complex is composed of two ATP-binding proteins (AraG), two transmembrane proteins (AraH) and a solute-binding protein (AraF).

Its subcellular location is the cell inner membrane. It carries out the reaction L-arabinose(out) + ATP + H2O = L-arabinose(in) + ADP + phosphate + H(+). In terms of biological role, part of the ABC transporter complex AraFGH involved in arabinose import. Responsible for energy coupling to the transport system. The chain is Arabinose import ATP-binding protein AraG from Paraburkholderia xenovorans (strain LB400).